The following is a 263-amino-acid chain: tRNA dimethylallyltransferase (263 aa).

This sequence belongs to the IPP transferase family. As to quaternary structure, monomer. The cofactor is Mg(2+).

It catalyses the reaction adenosine(37) in tRNA + dimethylallyl diphosphate = N(6)-dimethylallyladenosine(37) in tRNA + diphosphate. In terms of biological role, catalyzes the transfer of a dimethylallyl group onto the adenine at position 37 in tRNAs that read codons beginning with uridine, leading to the formation of N6-(dimethylallyl)adenosine (i(6)A). This Leifsonia xyli subsp. xyli (strain CTCB07) protein is tRNA dimethylallyltransferase.